Consider the following 440-residue polypeptide: Ribulose bisphosphate carboxylase large chain (440 aa).

Lys-4 carries the N6,N6,N6-trimethyllysine modification. Residues Asn-113 and Thr-163 each contribute to the substrate site. Lys-165 serves as the catalytic Proton acceptor. Lys-167 contributes to the substrate binding site. Residues Lys-191, Asp-193, and Glu-194 each contribute to the Mg(2+) site. Residue Lys-191 is modified to N6-carboxylysine. The active-site Proton acceptor is the His-284. The substrate site is built by Arg-285, His-317, and Ser-369.

The protein belongs to the RuBisCO large chain family. Type I subfamily. Heterohexadecamer of 8 large chains and 8 small chains; disulfide-linked. The disulfide link is formed within the large subunit homodimers. It depends on Mg(2+) as a cofactor. The disulfide bond which can form in the large chain dimeric partners within the hexadecamer appears to be associated with oxidative stress and protein turnover.

The protein localises to the plastid. It localises to the chloroplast. It carries out the reaction 2 (2R)-3-phosphoglycerate + 2 H(+) = D-ribulose 1,5-bisphosphate + CO2 + H2O. It catalyses the reaction D-ribulose 1,5-bisphosphate + O2 = 2-phosphoglycolate + (2R)-3-phosphoglycerate + 2 H(+). RuBisCO catalyzes two reactions: the carboxylation of D-ribulose 1,5-bisphosphate, the primary event in carbon dioxide fixation, as well as the oxidative fragmentation of the pentose substrate in the photorespiration process. Both reactions occur simultaneously and in competition at the same active site. In Matteuccia struthiopteris (European ostrich fern), this protein is Ribulose bisphosphate carboxylase large chain.